We begin with the raw amino-acid sequence, 211 residues long: Ribosomal RNA small subunit methyltransferase G (211 aa).

Residues Gly73, 126 to 127 (IE), and Arg142 each bind S-adenosyl-L-methionine.

The protein belongs to the methyltransferase superfamily. RNA methyltransferase RsmG family.

The protein localises to the cytoplasm. The enzyme catalyses guanosine(527) in 16S rRNA + S-adenosyl-L-methionine = N(7)-methylguanosine(527) in 16S rRNA + S-adenosyl-L-homocysteine. In terms of biological role, specifically methylates the N7 position of guanine in position 527 of 16S rRNA. The sequence is that of Ribosomal RNA small subunit methyltransferase G from Methylorubrum extorquens (strain CM4 / NCIMB 13688) (Methylobacterium extorquens).